Here is a 61-residue protein sequence, read N- to C-terminus: Probable tautomerase SERP0934 (61 aa).

The active-site Proton acceptor; via imino nitrogen is P2.

This sequence belongs to the 4-oxalocrotonate tautomerase family.

The chain is Probable tautomerase SERP0934 from Staphylococcus epidermidis (strain ATCC 35984 / DSM 28319 / BCRC 17069 / CCUG 31568 / BM 3577 / RP62A).